The chain runs to 187 residues: Adenylate kinase (187 aa).

Position 10 to 15 (10 to 15 (GSGKGT)) interacts with ATP. The interval 30–59 (STGDLLRAEVAAGSPLGLKAKEVMARGDLV) is NMP. AMP contacts are provided by residues Thr-31, Arg-36, 57–59 (DLV), 85–88 (GYPR), and Gln-92. The tract at residues 126-136 (GRAKAEGREDD) is LID. Arg-127 provides a ligand contact to ATP. AMP-binding residues include Arg-133 and Arg-144. ATP is bound at residue Gly-172.

This sequence belongs to the adenylate kinase family. In terms of assembly, monomer.

Its subcellular location is the cytoplasm. It catalyses the reaction AMP + ATP = 2 ADP. The protein operates within purine metabolism; AMP biosynthesis via salvage pathway; AMP from ADP: step 1/1. In terms of biological role, catalyzes the reversible transfer of the terminal phosphate group between ATP and AMP. Plays an important role in cellular energy homeostasis and in adenine nucleotide metabolism. The protein is Adenylate kinase of Xanthomonas axonopodis pv. citri (strain 306).